The chain runs to 453 residues: Phosphoglucosamine mutase (453 aa).

Serine 109 functions as the Phosphoserine intermediate in the catalytic mechanism. Residues serine 109, aspartate 246, aspartate 248, and aspartate 250 each coordinate Mg(2+). Residue serine 109 is modified to Phosphoserine.

The protein belongs to the phosphohexose mutase family. Mg(2+) is required as a cofactor. In terms of processing, activated by phosphorylation.

The catalysed reaction is alpha-D-glucosamine 1-phosphate = D-glucosamine 6-phosphate. Functionally, catalyzes the conversion of glucosamine-6-phosphate to glucosamine-1-phosphate. The chain is Phosphoglucosamine mutase from Leifsonia xyli subsp. xyli (strain CTCB07).